A 252-amino-acid polypeptide reads, in one-letter code: Neurexophilin-3 (252 aa).

The first 22 residues, 1–22 (MQLTRCCFVFLVQGSLYLVICG), serve as a signal peptide directing secretion. The tract at residues 23-75 (QEDGPPGSEDPEHDDHEGQPRPRVPRKRGHISPKSRPLANSTLLGLLAPPGEV) is II. The interval 27 to 59 (PPGSEDPEHDDHEGQPRPRVPRKRGHISPKSRP) is disordered. Positions 45–55 (RVPRKRGHISP) are enriched in basic residues. N-linked (GlcNAc...) asparagine glycans are attached at residues Asn-62, Asn-127, Asn-137, and Asn-143. Residues 76–157 (WGILGQPPNR…LVPPSKAVEF (82 aa)) are III. Positions 158–166 (HQEQQIFIE) are IV (linker domain). The tract at residues 167–252 (AKASKIFNCR…HSDTPYYPSG (86 aa)) is v (Cys-rich).

It belongs to the neurexophilin family. Post-translationally, may be proteolytically processed at the boundary between the N-terminal non-conserved and the central conserved domain in neuron-like cells. In terms of tissue distribution, brain. Detected in several other tissues.

It localises to the secreted. May be signaling molecules that resemble neuropeptides. Ligand for alpha-neurexins. This chain is Neurexophilin-3 (Nxph3), found in Rattus norvegicus (Rat).